Consider the following 104-residue polypeptide: Small ribosomal subunit protein bS6c (104 aa).

This sequence belongs to the bacterial ribosomal protein bS6 family.

The protein localises to the plastid. Its subcellular location is the cyanelle. Binds together with bS18 to 16S ribosomal RNA. This is Small ribosomal subunit protein bS6c (rps6) from Cyanophora paradoxa.